A 220-amino-acid chain; its full sequence is Putative vesicle-associated membrane protein 726 (220 aa).

Residues 1–196 (MGQQSLIYSF…LWFENMKIKL (196 aa)) lie on the Cytoplasmic side of the membrane. Positions 10-114 (FVARGTVILA…SLNKEFGSKL (105 aa)) constitute a Longin domain. One can recognise a v-SNARE coiled-coil homology domain in the interval 130 to 190 (KLSKVKAQVT…TKMKRKLWFE (61 aa)). The helical; Anchor for type IV membrane protein transmembrane segment at 197–217 (IVFGIIVALILIIILSVCHGF) threads the bilayer. The Vesicular segment spans residues 218-220 (KCT).

The protein belongs to the synaptobrevin family. In terms of tissue distribution, expressed in flowers, leaves, stems and roots.

Its subcellular location is the cell membrane. The protein localises to the early endosome membrane. Involved in the targeting and/or fusion of transport vesicles to their target membrane. This Arabidopsis thaliana (Mouse-ear cress) protein is Putative vesicle-associated membrane protein 726 (VAMP726).